The following is a 135-amino-acid chain: VapC ribonuclease aq_1901 (135 aa).

The PINc domain occupies 3–130; that stretch reads LLDTTVLLDF…FKKLGFKTVN (128 aa). Asp-5 is a Mg(2+) binding site.

Belongs to the PINc/VapC protein family. Mg(2+) is required as a cofactor.

Toxic component of a type II toxin-antitoxin (TA) system. An RNase. In Aquifex aeolicus (strain VF5), this protein is VapC ribonuclease aq_1901.